Reading from the N-terminus, the 187-residue chain is Elongation factor P (187 aa).

This sequence belongs to the elongation factor P family.

It is found in the cytoplasm. It participates in protein biosynthesis; polypeptide chain elongation. In terms of biological role, involved in peptide bond synthesis. Stimulates efficient translation and peptide-bond synthesis on native or reconstituted 70S ribosomes in vitro. Probably functions indirectly by altering the affinity of the ribosome for aminoacyl-tRNA, thus increasing their reactivity as acceptors for peptidyl transferase. The chain is Elongation factor P from Synechococcus sp. (strain CC9605).